The sequence spans 541 residues: Periplasmic oligopeptide-binding protein OppA (541 aa).

The N-terminal stretch at 1–20 (MQHKLLFSAIALALSYSAQA) is a signal peptide.

This sequence belongs to the bacterial solute-binding protein 5 family. As to quaternary structure, the complex is composed of two ATP-binding proteins (OppD and OppF), two transmembrane proteins (OppB and OppC) and a solute-binding protein (OppA).

The protein resides in the periplasm. Functionally, part of the ABC transporter complex OppABCDF involved in the uptake of oligopeptides. Plays an important nutritional role. Binds peptides containing from two to five amino acid residues. This Haemophilus influenzae (strain ATCC 51907 / DSM 11121 / KW20 / Rd) protein is Periplasmic oligopeptide-binding protein OppA (oppA).